A 174-amino-acid chain; its full sequence is Co-chaperone protein HscB homolog (174 aa).

The J domain maps to 2–74; it reads NYFELFKFPP…IRRAEHMLSL (73 aa).

This sequence belongs to the HscB family. As to quaternary structure, interacts with HscA and stimulates its ATPase activity.

In terms of biological role, co-chaperone involved in the maturation of iron-sulfur cluster-containing proteins. Seems to help targeting proteins to be folded toward HscA. The sequence is that of Co-chaperone protein HscB homolog from Shewanella oneidensis (strain ATCC 700550 / JCM 31522 / CIP 106686 / LMG 19005 / NCIMB 14063 / MR-1).